The sequence spans 173 residues: Cytochrome c-type biogenesis protein CcmE (173 aa).

The Cytoplasmic segment spans residues 1–8; sequence MMSRKKRR. The helical; Signal-anchor for type II membrane protein transmembrane segment at 9 to 29 threads the bilayer; it reads LWIVIACGIGLSTAVALMLFA. At 30-173 the chain is on the periplasmic side; that stretch reads FRSSLSFFMS…PAQIEASNNG (144 aa). Heme is bound by residues His127 and Tyr131. The segment at 145 to 173 is disordered; it reads KWNPKFGPPPNAGAWDDKSPAQIEASNNG.

It belongs to the CcmE/CycJ family.

It is found in the cell inner membrane. Functionally, heme chaperone required for the biogenesis of c-type cytochromes. Transiently binds heme delivered by CcmC and transfers the heme to apo-cytochromes in a process facilitated by CcmF and CcmH. This is Cytochrome c-type biogenesis protein CcmE from Acidiphilium cryptum (strain JF-5).